A 345-amino-acid polypeptide reads, in one-letter code: Phosphoribosylformylglycinamidine cyclo-ligase (345 aa).

It belongs to the AIR synthase family.

Its subcellular location is the cytoplasm. The enzyme catalyses 2-formamido-N(1)-(5-O-phospho-beta-D-ribosyl)acetamidine + ATP = 5-amino-1-(5-phospho-beta-D-ribosyl)imidazole + ADP + phosphate + H(+). Its pathway is purine metabolism; IMP biosynthesis via de novo pathway; 5-amino-1-(5-phospho-D-ribosyl)imidazole from N(2)-formyl-N(1)-(5-phospho-D-ribosyl)glycinamide: step 2/2. The chain is Phosphoribosylformylglycinamidine cyclo-ligase from Cronobacter sakazakii (strain ATCC BAA-894) (Enterobacter sakazakii).